We begin with the raw amino-acid sequence, 69 residues long: Amphipathic peptide StCT2 (69 aa).

The N-terminal stretch at 1-23 (MKTQFAVLIISMILMQMLVQTEA) is a signal peptide. Ile37 carries the post-translational modification Isoleucine amide. Positions 41–69 (SLRNQDQFDNMFDSDLSDADLKLLDDLFD) are excised as a propeptide.

It belongs to the non-disulfide-bridged peptide (NDBP) superfamily. Short antimicrobial peptide (group 4) family. In terms of tissue distribution, expressed by the venom gland.

Its subcellular location is the secreted. The protein resides in the target cell membrane. In terms of biological role, antimicrobial peptide that is rapidly bactericidal against Gram-positive bacteria. In Scorpiops tibetanus (Scorpion), this protein is Amphipathic peptide StCT2.